The chain runs to 423 residues: Serine--tRNA ligase (423 aa).

An L-serine-binding site is contributed by Thr-229–Glu-231. Arg-260–Glu-262 contacts ATP. Glu-283 is a binding site for L-serine. Glu-347–Ser-350 is an ATP binding site. Ser-383 is a binding site for L-serine.

The protein belongs to the class-II aminoacyl-tRNA synthetase family. Type-1 seryl-tRNA synthetase subfamily. As to quaternary structure, homodimer. The tRNA molecule binds across the dimer.

Its subcellular location is the cytoplasm. The enzyme catalyses tRNA(Ser) + L-serine + ATP = L-seryl-tRNA(Ser) + AMP + diphosphate + H(+). It catalyses the reaction tRNA(Sec) + L-serine + ATP = L-seryl-tRNA(Sec) + AMP + diphosphate + H(+). It participates in aminoacyl-tRNA biosynthesis; selenocysteinyl-tRNA(Sec) biosynthesis; L-seryl-tRNA(Sec) from L-serine and tRNA(Sec): step 1/1. In terms of biological role, catalyzes the attachment of serine to tRNA(Ser). Is also able to aminoacylate tRNA(Sec) with serine, to form the misacylated tRNA L-seryl-tRNA(Sec), which will be further converted into selenocysteinyl-tRNA(Sec). The chain is Serine--tRNA ligase from Trichlorobacter lovleyi (strain ATCC BAA-1151 / DSM 17278 / SZ) (Geobacter lovleyi).